A 310-amino-acid chain; its full sequence is MQIEFLGTGAGSPSKQRNVSSLALRLLEERNAIWLFDCGEATQHQILHTTIRPRKVEKIFITHLHGDHIFGLPGFLSSRSFQGGDEPLTIYGPKGIKDFVQTALKVSESRLSYPLKFVELTGDGEVFKDQTFTVTARRLDHKIASFGYRVEEAAHPGELMVEKVRQAGIPSGPLYGQLKRGEVVTLPDGRTVDGHDFIGAPQPGRIVAILGDTRVTDNAVKLAKGADVLVHEATFAKNEQRLAHNYYHSTSVQAATVAKKAGAQRLLLNHISARYVGRYANELAYQVRDIFEQTRVVNDLDVIEIPFKER.

Residues H63, H65, D67, H68, H141, D212, and H270 each contribute to the Zn(2+) site. The active-site Proton acceptor is the D67.

The protein belongs to the RNase Z family. Homodimer. It depends on Zn(2+) as a cofactor.

The catalysed reaction is Endonucleolytic cleavage of RNA, removing extra 3' nucleotides from tRNA precursor, generating 3' termini of tRNAs. A 3'-hydroxy group is left at the tRNA terminus and a 5'-phosphoryl group is left at the trailer molecule.. Zinc phosphodiesterase, which displays some tRNA 3'-processing endonuclease activity. Probably involved in tRNA maturation, by removing a 3'-trailer from precursor tRNA. The sequence is that of Ribonuclease Z from Limosilactobacillus fermentum (strain NBRC 3956 / LMG 18251) (Lactobacillus fermentum).